A 174-amino-acid chain; its full sequence is Adenine phosphoribosyltransferase (174 aa).

It belongs to the purine/pyrimidine phosphoribosyltransferase family. As to quaternary structure, homodimer.

The protein localises to the cytoplasm. The enzyme catalyses AMP + diphosphate = 5-phospho-alpha-D-ribose 1-diphosphate + adenine. Its pathway is purine metabolism; AMP biosynthesis via salvage pathway; AMP from adenine: step 1/1. Its function is as follows. Catalyzes a salvage reaction resulting in the formation of AMP, that is energically less costly than de novo synthesis. The chain is Adenine phosphoribosyltransferase from Nitrosomonas europaea (strain ATCC 19718 / CIP 103999 / KCTC 2705 / NBRC 14298).